The following is a 65-amino-acid chain: uncharacterized protein (65 aa).

This is an uncharacterized protein from Dictyostelium discoideum (Social amoeba).